Consider the following 226-residue polypeptide: Methylamine utilization ferredoxin-type protein MauM (226 aa).

4Fe-4S ferredoxin-type domains lie at 59–87 (PEPE…LASW), 95–127 (TPYF…PLLT), 136–172 (VAVL…LKQI), and 180–211 (QIPT…LLPR). 16 residues coordinate [4Fe-4S] cluster: cysteine 67, cysteine 70, cysteine 73, cysteine 77, cysteine 105, cysteine 108, cysteine 113, cysteine 117, cysteine 145, cysteine 153, cysteine 156, cysteine 160, cysteine 189, cysteine 192, cysteine 195, and cysteine 199.

It participates in one-carbon metabolism; methylamine degradation. Functionally, involved in electron transfer. The chain is Methylamine utilization ferredoxin-type protein MauM (mauM) from Methylophilus methylotrophus (Bacterium W3A1).